We begin with the raw amino-acid sequence, 338 residues long: Methionine import ATP-binding protein MetN 2 (338 aa).

One can recognise an ABC transporter domain in the interval 2–242; that stretch reads IEIEKVCVDF…PQHAFTQQLV (241 aa). Residue 39-46 coordinates ATP; sequence GTSGAGKS.

This sequence belongs to the ABC transporter superfamily. Methionine importer (TC 3.A.1.24) family. In terms of assembly, the complex is composed of two ATP-binding proteins (MetN), two transmembrane proteins (MetI) and a solute-binding protein (MetQ).

It is found in the cell inner membrane. The catalysed reaction is L-methionine(out) + ATP + H2O = L-methionine(in) + ADP + phosphate + H(+). It carries out the reaction D-methionine(out) + ATP + H2O = D-methionine(in) + ADP + phosphate + H(+). Its function is as follows. Part of the ABC transporter complex MetNIQ involved in methionine import. Responsible for energy coupling to the transport system. The chain is Methionine import ATP-binding protein MetN 2 from Salmonella paratyphi A (strain ATCC 9150 / SARB42).